We begin with the raw amino-acid sequence, 150 residues long: Arginine repressor (150 aa).

The protein belongs to the ArgR family.

It is found in the cytoplasm. The protein operates within amino-acid biosynthesis; L-arginine biosynthesis [regulation]. Regulates arginine biosynthesis genes. The polypeptide is Arginine repressor (Clostridium acetobutylicum (strain ATCC 824 / DSM 792 / JCM 1419 / IAM 19013 / LMG 5710 / NBRC 13948 / NRRL B-527 / VKM B-1787 / 2291 / W)).